A 239-amino-acid polypeptide reads, in one-letter code: Lytic polysaccharide monooxygenase-like protein X325 (239 aa).

The signal sequence occupies residues 1–24 (MVLPSSVSQWAALIALLCAGLANA). Histidine 25 serves as a coordination point for Cu(2+). Asparagine 41, asparagine 56, asparagine 79, asparagine 117, asparagine 150, and asparagine 197 each carry an N-linked (GlcNAc...) asparagine glycan. 2 cysteine pairs are disulfide-bonded: cysteine 71/cysteine 176 and cysteine 141/cysteine 195. Serine 214 carries the GPI-anchor amidated serine lipid modification. Residues 215-239 (AAAPKSSLMSVLPVYMVALLSWAMM) constitute a propeptide, removed in mature form.

This sequence belongs to the X325 family. Cu(2+) is required as a cofactor.

It localises to the cell membrane. Lytic polysaccharide monooxygenase-like protein that has diverged to biological functions other than polysaccharide degradation since it does not perform oxidative cleavage of polysaccharides. Acts as a cell surface-bound protein that functions in the copper-accumulation pathway. May also act as the major cell wall sensor that regulates MAP kinase-dependent hyphal anastomosis, the fusion of hyphal cells. This is Lytic polysaccharide monooxygenase-like protein X325 from Aspergillus fumigatus (strain ATCC MYA-4609 / CBS 101355 / FGSC A1100 / Af293) (Neosartorya fumigata).